Reading from the N-terminus, the 145-residue chain is UPF0179 protein MmarC6_0993 (145 aa).

The protein belongs to the UPF0179 family.

The sequence is that of UPF0179 protein MmarC6_0993 from Methanococcus maripaludis (strain C6 / ATCC BAA-1332).